The chain runs to 206 residues: Probable thymidylate kinase (206 aa).

Residue 10-17 participates in ATP binding; that stretch reads GIDGSGKS.

It belongs to the thymidylate kinase family.

It catalyses the reaction dTMP + ATP = dTDP + ADP. This Methanosarcina mazei (strain ATCC BAA-159 / DSM 3647 / Goe1 / Go1 / JCM 11833 / OCM 88) (Methanosarcina frisia) protein is Probable thymidylate kinase.